Here is a 536-residue protein sequence, read N- to C-terminus: Zinc finger CCCH domain-containing protein 18 (536 aa).

Residues 156 to 183 (EFPVKICHYFNKGFCKHGNNCRYFHGQI) form a C3H1-type zinc finger. One can recognise an HTH OST-type domain in the interval 211 to 294 (SLEKLEGEII…HGQHSVILAE (84 aa)). The region spanning 317–392 (RQIYLTFPAE…ARVLVKPYRE (76 aa)) is the RRM domain.

Functionally, possesses ribonuclease activity in vitro. This is Zinc finger CCCH domain-containing protein 18 from Arabidopsis thaliana (Mouse-ear cress).